The primary structure comprises 134 residues: ATP synthase epsilon chain (134 aa).

Belongs to the ATPase epsilon chain family. In terms of assembly, F-type ATPases have 2 components, CF(1) - the catalytic core - and CF(0) - the membrane proton channel. CF(1) has five subunits: alpha(3), beta(3), gamma(1), delta(1), epsilon(1). CF(0) has three main subunits: a, b and c. In this bacterium the a and b subunits are transcribed but do not seem to be translated, thus the ATP synthase consists of the alpha, beta, gamma, delta, epsilon and c subunits.

The protein resides in the cell membrane. Functionally, produces ATP from ADP in the presence of a proton gradient across the membrane. This Moorella thermoacetica (strain ATCC 39073 / JCM 9320) protein is ATP synthase epsilon chain.